Consider the following 408-residue polypeptide: Argininosuccinate synthase (408 aa).

ATP is bound by residues Ala-12 to Ser-20 and Ala-39. 2 residues coordinate L-citrulline: Tyr-92 and Ser-97. Gly-122 provides a ligand contact to ATP. Thr-124, Asn-128, and Asp-129 together coordinate L-aspartate. Asn-128 is a binding site for L-citrulline. L-citrulline-binding residues include Arg-132, Ser-183, Ser-192, Glu-268, and Tyr-280.

This sequence belongs to the argininosuccinate synthase family. Type 1 subfamily. In terms of assembly, homotetramer.

Its subcellular location is the cytoplasm. The catalysed reaction is L-citrulline + L-aspartate + ATP = 2-(N(omega)-L-arginino)succinate + AMP + diphosphate + H(+). Its pathway is amino-acid biosynthesis; L-arginine biosynthesis; L-arginine from L-ornithine and carbamoyl phosphate: step 2/3. The sequence is that of Argininosuccinate synthase from Caulobacter vibrioides (strain ATCC 19089 / CIP 103742 / CB 15) (Caulobacter crescentus).